A 686-amino-acid polypeptide reads, in one-letter code: DNA ligase (686 aa).

NAD(+) is bound by residues 34–38 (DAEYD), 83–84 (SI), and Glu120. Lys122 acts as the N6-AMP-lysine intermediate in catalysis. NAD(+) is bound by residues Arg143, Glu180, Lys298, and Lys322. Zn(2+)-binding residues include Cys420, Cys423, Cys438, and Cys444. Positions 603–686 (QSGGILSGKT…ALLGSNKKNG (84 aa)) constitute a BRCT domain.

The protein belongs to the NAD-dependent DNA ligase family. LigA subfamily. Mg(2+) serves as cofactor. It depends on Mn(2+) as a cofactor.

The catalysed reaction is NAD(+) + (deoxyribonucleotide)n-3'-hydroxyl + 5'-phospho-(deoxyribonucleotide)m = (deoxyribonucleotide)n+m + AMP + beta-nicotinamide D-nucleotide.. In terms of biological role, DNA ligase that catalyzes the formation of phosphodiester linkages between 5'-phosphoryl and 3'-hydroxyl groups in double-stranded DNA using NAD as a coenzyme and as the energy source for the reaction. It is essential for DNA replication and repair of damaged DNA. The chain is DNA ligase from Thiobacillus denitrificans (strain ATCC 25259 / T1).